We begin with the raw amino-acid sequence, 259 residues long: Taurine import ATP-binding protein TauB (259 aa).

In terms of domain architecture, ABC transporter spans 4–233 (LELERISAQY…RYAAGESARA (230 aa)). 38 to 45 (GPSGSGKT) is an ATP binding site.

This sequence belongs to the ABC transporter superfamily. Taurine importer (TC 3.A.1.17.1) family. The complex is composed of two ATP-binding proteins (TauB), two transmembrane proteins (TauC) and a solute-binding protein (TauA).

The protein resides in the cell inner membrane. The catalysed reaction is taurine(out) + ATP + H2O = taurine(in) + ADP + phosphate + H(+). Part of the ABC transporter complex TauABC involved in taurine import. Responsible for energy coupling to the transport system. The polypeptide is Taurine import ATP-binding protein TauB (Pseudomonas entomophila (strain L48)).